Here is a 102-residue protein sequence, read N- to C-terminus: Glutaredoxin (102 aa).

The Glutaredoxin domain occupies 3–102 (MTKTKELVSS…VPLLTEAGAV (100 aa)). Cys-23 and Cys-26 are disulfide-bonded.

It belongs to the glutaredoxin family. CPYC subfamily.

It is found in the cytoplasm. Functionally, has a glutathione-disulfide oxidoreductase activity in the presence of NADPH and glutathione reductase. Reduces low molecular weight disulfides and proteins. In Ricinus communis (Castor bean), this protein is Glutaredoxin.